Reading from the N-terminus, the 427-residue chain is Enolase (427 aa).

Q162 serves as a coordination point for (2R)-2-phosphoglycerate. The active-site Proton donor is E206. Mg(2+) is bound by residues D243, E286, and D313. (2R)-2-phosphoglycerate contacts are provided by K338, R367, S368, and K389. K338 functions as the Proton acceptor in the catalytic mechanism.

This sequence belongs to the enolase family. It depends on Mg(2+) as a cofactor.

Its subcellular location is the cytoplasm. It is found in the secreted. The protein resides in the cell surface. It catalyses the reaction (2R)-2-phosphoglycerate = phosphoenolpyruvate + H2O. It participates in carbohydrate degradation; glycolysis; pyruvate from D-glyceraldehyde 3-phosphate: step 4/5. In terms of biological role, catalyzes the reversible conversion of 2-phosphoglycerate (2-PG) into phosphoenolpyruvate (PEP). It is essential for the degradation of carbohydrates via glycolysis. The protein is Enolase of Methanopyrus kandleri (strain AV19 / DSM 6324 / JCM 9639 / NBRC 100938).